The following is a 148-amino-acid chain: UPF0179 protein Mpal_0949 (148 aa).

The protein belongs to the UPF0179 family.

In Methanosphaerula palustris (strain ATCC BAA-1556 / DSM 19958 / E1-9c), this protein is UPF0179 protein Mpal_0949.